The chain runs to 224 residues: Flagellar L-ring protein (224 aa).

The first 15 residues, 1–15 (MARYFILAVALLLTA), serve as a signal peptide directing secretion. Cys16 carries N-palmitoyl cysteine lipidation. Cys16 is lipidated: S-diacylglycerol cysteine.

The protein belongs to the FlgH family. In terms of assembly, the basal body constitutes a major portion of the flagellar organelle and consists of four rings (L,P,S, and M) mounted on a central rod.

It localises to the cell outer membrane. The protein localises to the bacterial flagellum basal body. In terms of biological role, assembles around the rod to form the L-ring and probably protects the motor/basal body from shearing forces during rotation. In Shewanella sp. (strain MR-7), this protein is Flagellar L-ring protein.